A 330-amino-acid chain; its full sequence is MAVSDHHCGGGGRSWRFAVACGVLSRCVKAEAAAAANGRHRHHPTMLLMPGADVEPDVREEAAAAAQLKIMYGGRMLVFDDFFPAGGAVVELVRAAARAGQDVRRAGAARRRVGDSRGLDAGLPVVRKVSLQRFVEKRRRMRVYHILYTDKSSHHVPGPGRYRSWQCRIIIAAVAGAGGFVVACGVLSRCVKAEAAAAAANGRRHHHHHHTTMLLMPGADVEPDVREEAAAAAQLKIMYGGRMLVFDDFFPAGGAVVELVRAAARAGRDDDGARARRRPAGGEEGVAAAVRGEEKSQAARGDGAVHTRHSPPMLPARTPGSGRTDDAAFY.

Residues 61 to 97 (EAAAAAQLKIMYGGRMLVFDDFFPAGGAVVELVRAAA) enclose the Tify 1 domain. The Jas signature appears at 124–142 (PVVRKVSLQRFVEKRRRMR). A Nuclear localization signal motif is present at residues 126–133 (VRKVSLQR). The Tify 2 domain occupies 228 to 264 (EAAAAAQLKIMYGGRMLVFDDFFPAGGAVVELVRAAA). A disordered region spans residues 267-330 (GRDDDGARAR…SGRTDDAAFY (64 aa)).

It belongs to the TIFY/JAZ family. Ubiquitinated. Targeted for degradation by the SCF(COI1) E3 ubiquitin ligase-proteasome pathway during jasmonate signaling.

It localises to the nucleus. Its function is as follows. Repressor of jasmonate responses. The protein is Protein TIFY 11f of Oryza sativa subsp. japonica (Rice).